The sequence spans 977 residues: Collagen alpha-2(I) chain (977 aa).

The tract at residues 1–977 is disordered; the sequence is SGGFDFSFLP…RGSQGSQGPS (977 aa). 4 positions are modified to 4-hydroxyproline: Pro10, Pro13, Pro28, and Pro34. Over residues 17-66 the composition is skewed to low complexity; sequence GPMGLMGPRGPPGASGAPGPQGFQGPAGEPGEPGQTGPAGARGPAGPPGK. Lys91 bears the 5-hydroxylysine; alternate mark. O-linked (Gal...) hydroxylysine; alternate glycosylation is present at Lys91. 2 stretches are compositionally biased toward low complexity: residues 138 to 159 and 205 to 226; these read SRGSDGSVGPVGPAGPIGSAGP and PGANGLTGAKGAAGLPGVAGAP. A compositionally biased stretch (gly residues) spans 258–267; that stretch reads GESGGKGEPG. The span at 268–278 shows a compositional bias: low complexity; that stretch reads SAGPQGPPGSS. The segment covering 300 to 309 has biased composition (gly residues); it reads GLRGGPGSRG. A compositionally biased stretch (low complexity) spans 322–338; sequence PAGARGASGPAGVRGPS. A 4-hydroxyproline mark is found at Pro344 and Pro347. Residues 373–392 are compositionally biased toward low complexity; it reads LPGIDGRPGPIGPAGARGEA. Positions 441 to 450 are enriched in gly residues; that stretch reads GVQGGKGEQG. 2 stretches are compositionally biased toward low complexity: residues 497–514 and 526–536; these read SGESGAVGPSGAIGSRGP and EPGVVGAPGTA. Residues 537–546 show a composition bias toward gly residues; it reads GPAGSGGLPG. Low complexity-rich tracts occupy residues 569–605 and 620–640; these read VGTTGRDGARGAPGAVGAPGPAGATGDRGEAGAAGPA and VGPAGPNGFAGPAGAAGQPGA. Over residues 641 to 650 the composition is skewed to basic and acidic residues; it reads KGERGTKGPK. Over residues 658-668 the composition is skewed to low complexity; sequence PTGPVGSAGPA. Residues 678–687 are compositionally biased toward gly residues; the sequence is GSRGDGGPPG. Residues 689–698 show a composition bias toward low complexity; that stretch reads TGFPGAAGRT. Positions 735–744 are enriched in gly residues; the sequence is GETGAGGPPG. Composition is skewed to low complexity over residues 752-779 and 787-797; these read SGEPGTAGPPGTAGPQGLLGAPGILGLP and LPGVAGAVGEP. Positions 798-817 are enriched in gly residues; the sequence is GPLGIGPPGARGPSGAGVNG. 2 stretches are compositionally biased toward low complexity: residues 853 to 871 and 878 to 898; these read PVGAAGAPGPHGAVGPAGK and PGPAGSVGPVGAVGPRGPSGP. The segment covering 902 to 913 has biased composition (basic and acidic residues); the sequence is RGDKGEAGDKGP.

This sequence belongs to the fibrillar collagen family. As to quaternary structure, trimers of one alpha 2(I) and two alpha 1(I) chains. Interacts (via C-terminus) with TMEM131 (via PapD-L domain); the interaction is direct and is involved in assembly and TRAPPIII ER-to-Golgi transport complex-dependent secretion of collagen. Prolines at the third position of the tripeptide repeating unit (G-X-Y) are hydroxylated in some or all of the chains. In terms of tissue distribution, expressed in bones.

The protein localises to the secreted. It localises to the extracellular space. Its subcellular location is the extracellular matrix. Its function is as follows. Type I collagen is a member of group I collagen (fibrillar forming collagen). The polypeptide is Collagen alpha-2(I) chain (Scelidodon sp. (strain SLP-2019) (South American ground sloth)).